The primary structure comprises 279 residues: Putative pyruvate, phosphate dikinase regulatory protein (279 aa).

An ADP-binding site is contributed by 153–160 (GISRTSKT).

Belongs to the pyruvate, phosphate/water dikinase regulatory protein family. PDRP subfamily.

The catalysed reaction is N(tele)-phospho-L-histidyl/L-threonyl-[pyruvate, phosphate dikinase] + ADP = N(tele)-phospho-L-histidyl/O-phospho-L-threonyl-[pyruvate, phosphate dikinase] + AMP + H(+). It carries out the reaction N(tele)-phospho-L-histidyl/O-phospho-L-threonyl-[pyruvate, phosphate dikinase] + phosphate + H(+) = N(tele)-phospho-L-histidyl/L-threonyl-[pyruvate, phosphate dikinase] + diphosphate. Functionally, bifunctional serine/threonine kinase and phosphorylase involved in the regulation of the pyruvate, phosphate dikinase (PPDK) by catalyzing its phosphorylation/dephosphorylation. The protein is Putative pyruvate, phosphate dikinase regulatory protein of Brucella melitensis biotype 2 (strain ATCC 23457).